Reading from the N-terminus, the 381-residue chain is 4-hydroxyphenylpyruvate dioxygenase (381 aa).

VOC domains follow at residues 22 to 156 and 184 to 338; these read GMDA…LVER and AVDH…IFTK. Positions 187, 270, and 349 each coordinate Fe cation.

This sequence belongs to the 4HPPD family. In terms of assembly, homodimer. The cofactor is Fe cation.

It carries out the reaction 3-(4-hydroxyphenyl)pyruvate + O2 = homogentisate + CO2. It participates in amino-acid degradation; L-phenylalanine degradation; acetoacetate and fumarate from L-phenylalanine: step 3/6. This is 4-hydroxyphenylpyruvate dioxygenase (hpd) from Streptomyces coelicolor (strain ATCC BAA-471 / A3(2) / M145).